The chain runs to 771 residues: Assimilatory nitrate reductase electron transfer subunit (771 aa).

Residue 43 to 79 participates in FAD binding; it reads YNRILLSSVLQGEASLDDITLNSKDWYDKHGITLYTG. The [2Fe-2S] cluster site is built by cysteine 414, cysteine 416, cysteine 449, and cysteine 452.

It depends on FAD as a cofactor. [2Fe-2S] cluster serves as cofactor.

Its function is as follows. Required for nitrate assimilation. In Bacillus subtilis (strain 168), this protein is Assimilatory nitrate reductase electron transfer subunit (nasB).